The chain runs to 193 residues: Lipid A acyltransferase PagP (193 aa).

The first 32 residues, 1 to 32 (MNGMAVVMIIRKYFLIIALLVMPWLAIPSVSA), serve as a signal peptide directing secretion. Catalysis depends on residues H65, D108, and S109.

Belongs to the lipid A palmitoyltransferase family. Homodimer.

It is found in the cell outer membrane. It carries out the reaction a lipid A + a 1,2-diacyl-sn-glycero-3-phosphocholine = a hepta-acyl lipid A + a 2-acyl-sn-glycero-3-phosphocholine. The catalysed reaction is a lipid IVA + a 1,2-diacyl-sn-glycero-3-phosphocholine = a lipid IVB + a 2-acyl-sn-glycero-3-phosphocholine. It catalyses the reaction a lipid IIA + a 1,2-diacyl-sn-glycero-3-phosphocholine = a lipid IIB + a 2-acyl-sn-glycero-3-phosphocholine. Functionally, transfers a fatty acid residue from the sn-1 position of a phospholipid to the N-linked hydroxyfatty acid chain on the proximal unit of lipid A or its precursors. The protein is Lipid A acyltransferase PagP of Salmonella paratyphi C (strain RKS4594).